A 472-amino-acid chain; its full sequence is Argininosuccinate lyase (472 aa).

It belongs to the lyase 1 family. Argininosuccinate lyase subfamily.

The protein localises to the cytoplasm. The enzyme catalyses 2-(N(omega)-L-arginino)succinate = fumarate + L-arginine. It participates in amino-acid biosynthesis; L-arginine biosynthesis; L-arginine from L-ornithine and carbamoyl phosphate: step 3/3. The protein is Argininosuccinate lyase of Mycolicibacterium paratuberculosis (strain ATCC BAA-968 / K-10) (Mycobacterium paratuberculosis).